Reading from the N-terminus, the 240-residue chain is Pyridoxine 5'-phosphate synthase (240 aa).

Residue asparagine 7 participates in 3-amino-2-oxopropyl phosphate binding. Residue 9-10 coordinates 1-deoxy-D-xylulose 5-phosphate; sequence DH. Arginine 18 is a 3-amino-2-oxopropyl phosphate binding site. The Proton acceptor role is filled by histidine 43. The 1-deoxy-D-xylulose 5-phosphate site is built by arginine 45 and histidine 50. The active-site Proton acceptor is glutamate 70. Threonine 100 contacts 1-deoxy-D-xylulose 5-phosphate. Histidine 191 (proton donor) is an active-site residue. Residues glycine 192 and 213–214 each bind 3-amino-2-oxopropyl phosphate; that span reads GH.

Belongs to the PNP synthase family. As to quaternary structure, homooctamer; tetramer of dimers.

It localises to the cytoplasm. It carries out the reaction 3-amino-2-oxopropyl phosphate + 1-deoxy-D-xylulose 5-phosphate = pyridoxine 5'-phosphate + phosphate + 2 H2O + H(+). It participates in cofactor biosynthesis; pyridoxine 5'-phosphate biosynthesis; pyridoxine 5'-phosphate from D-erythrose 4-phosphate: step 5/5. Its function is as follows. Catalyzes the complicated ring closure reaction between the two acyclic compounds 1-deoxy-D-xylulose-5-phosphate (DXP) and 3-amino-2-oxopropyl phosphate (1-amino-acetone-3-phosphate or AAP) to form pyridoxine 5'-phosphate (PNP) and inorganic phosphate. The chain is Pyridoxine 5'-phosphate synthase from Coxiella burnetii (strain Dugway 5J108-111).